We begin with the raw amino-acid sequence, 735 residues long: Ethylene receptor 1 (735 aa).

A run of 3 helical transmembrane segments spans residues 23 to 43 (ISDFFIAVAYFSIPLELIYFV), 54 to 74 (VLVQFGAFIVLCGATHLINLW), and 92 to 112 (VLTAVVSCATALMLVHIIPDL). Cu cation-binding residues include cysteine 65 and histidine 69. A GAF domain is found at 158 to 307 (DRHTILKTTL…VVADQVAVAL (150 aa)). The region spanning 350 to 586 (VMNHEMRTPM…IFDVKLAISN (237 aa)) is the Histidine kinase domain. Residue histidine 353 is modified to Phosphohistidine; by autocatalysis. The Response regulatory domain occupies 609 to 726 (KVLVMDENGV…NMRNVLSDRL (118 aa)). The residue at position 657 (aspartate 657) is a 4-aspartylphosphate. A Glycyl lysine isopeptide (Lys-Gly) (interchain with G-Cter in ubiquitin) cross-link involves residue lysine 711.

It belongs to the ethylene receptor family. Homodimer; disulfide-linked. It depends on Cu cation as a cofactor. In terms of processing, activation probably requires a transfer of a phosphate group between a His in the transmitter domain and an Asp of the receiver domain.

The protein resides in the endoplasmic reticulum membrane. It catalyses the reaction ATP + protein L-histidine = ADP + protein N-phospho-L-histidine.. In terms of biological role, may act early in the ethylene signal transduction pathway, possibly as an ethylene receptor, or as a regulator of the pathway. This chain is Ethylene receptor 1 (ETR1), found in Brassica oleracea (Wild cabbage).